The following is a 255-amino-acid chain: MAYSIGIDSGSTATKGILLADGVITRRFLVPTPFRPATAITEAWETLREGLETTPFLTLTGYGRQLVDFADKQVTEISCHGLGARFLAPATRAVIDIGGQDSKVIQLDDDGNLCDFLMNDKCAAGTGRFLEVISRTLGTSVEQLDSITENVTPHAITSMCTVFAESEAISLRSAGVAPEAILAGVINAMARRSANFIARLSCEAPILFTGGVSHCQKFARMLESHLRMPVNTHPDAQFAGAIGAAVIGQRVRTRR.

The [4Fe-4S] cluster site is built by C122 and C160.

As to quaternary structure, homodimer. Requires [4Fe-4S] cluster as cofactor.

This is an uncharacterized protein from Escherichia coli (strain K12).